A 146-amino-acid polypeptide reads, in one-letter code: Mu-like prophage FluMu G protein 1 (146 aa).

It to phage Mu protein G.

This Haemophilus influenzae (strain ATCC 51907 / DSM 11121 / KW20 / Rd) protein is Mu-like prophage FluMu G protein 1.